The chain runs to 372 residues: UDP-2-acetamido-2,6-beta-L-arabino-hexul-4-ose reductase (372 aa).

NAD(+)-binding positions include glycine 7–proline 30, leucine 53, tyrosine 103, and lysine 107. The Proton acceptor role is filled by tyrosine 103. Residues asparagine 132 and histidine 279–valine 282 each bind substrate.

This sequence belongs to the NAD(P)-dependent epimerase/dehydratase family. In terms of assembly, homodimer.

It catalyses the reaction UDP-2-acetamido-2,6-dideoxy-beta-L-arabino-hex-4-ulose + NADH + H(+) = UDP-2-acetamido-2,6-dideoxy-beta-L-talose + NAD(+). It carries out the reaction UDP-2-acetamido-2,6-dideoxy-beta-L-arabino-hex-4-ulose + NADPH + H(+) = UDP-2-acetamido-2,6-dideoxy-beta-L-talose + NADP(+). It functions in the pathway bacterial outer membrane biogenesis; LPS O-antigen biosynthesis. Bifunctional enzyme that mediates C-3 epimerization of the second intermediate followed by reduction at C-4 during serogroup O11 O-antigen biosynthesis, thus catalyzing the conversion of UDP-N-acetyl-D-glucosamine to precursors for the biosynthesis of O antigen. The protein is UDP-2-acetamido-2,6-beta-L-arabino-hexul-4-ose reductase of Pseudomonas aeruginosa (strain ATCC 29260 / BCRC 12902 / CIP 102967 / NCIMB 11965 / PA103).